Reading from the N-terminus, the 284-residue chain is tRNA-cytidine(32) 2-sulfurtransferase (284 aa).

A compositionally biased stretch (polar residues) spans Met-1–Ala-11. Residues Met-1–Pro-20 are disordered. Positions Ser-63–Ser-68 match the PP-loop motif motif. Positions 138, 141, and 229 each coordinate [4Fe-4S] cluster.

Belongs to the TtcA family. Homodimer. Mg(2+) is required as a cofactor. The cofactor is [4Fe-4S] cluster.

The protein localises to the cytoplasm. The catalysed reaction is cytidine(32) in tRNA + S-sulfanyl-L-cysteinyl-[cysteine desulfurase] + AH2 + ATP = 2-thiocytidine(32) in tRNA + L-cysteinyl-[cysteine desulfurase] + A + AMP + diphosphate + H(+). It participates in tRNA modification. In terms of biological role, catalyzes the ATP-dependent 2-thiolation of cytidine in position 32 of tRNA, to form 2-thiocytidine (s(2)C32). The sulfur atoms are provided by the cysteine/cysteine desulfurase (IscS) system. This Chelativorans sp. (strain BNC1) protein is tRNA-cytidine(32) 2-sulfurtransferase.